The chain runs to 147 residues: Endothelial differentiation-related factor 1 homolog (147 aa).

Residues 1–69 (MAESDWDTVT…KLDRETEELH (69 aa)) form a disordered region. Residues 33–42 (RRGEEVETSK) are compositionally biased toward basic and acidic residues. The segment covering 46 to 58 (AGQNKQHTITRNT) has biased composition (polar residues). Basic and acidic residues predominate over residues 59 to 69 (AKLDRETEELH). Residues 81–135 (IQQGRQGKGMTQKDLATKINEKPQVIADYECGKAIPNNQVMGKIERVIGLKLRGK) enclose the HTH cro/C1-type domain. Positions 92 to 111 (QKDLATKINEKPQVIADYEC) form a DNA-binding region, H-T-H motif.

It localises to the nucleus. Functionally, probable transcriptional coactivator. This chain is Endothelial differentiation-related factor 1 homolog (edf1), found in Xenopus laevis (African clawed frog).